A 360-amino-acid polypeptide reads, in one-letter code: Arginase, non-hepatic 2 (360 aa).

Residues His122, Asp145, His147, and Asp149 each coordinate Mn(2+). Substrate-binding positions include 147–151 (HADIN), 158–160 (SGN), and Asp204. Mn(2+) is bound by residues Asp253 and Asp255. Positions 267 and 298 each coordinate substrate.

This sequence belongs to the arginase family. In terms of assembly, homotrimer. Requires Mn(2+) as cofactor. Expressed at differing tadpole stages in tail, intestine, hindlimb and trunk region. Strongest in tadpole tail.

It catalyses the reaction L-arginine + H2O = urea + L-ornithine. The protein operates within nitrogen metabolism; urea cycle; L-ornithine and urea from L-arginine: step 1/1. In terms of biological role, as well as its role in the urea cycle, may be involved in tissue remodeling. This chain is Arginase, non-hepatic 2 (arg2-b), found in Xenopus laevis (African clawed frog).